The sequence spans 425 residues: Serine--tRNA ligase (425 aa).

230–232 contributes to the L-serine binding site; it reads TAE. An ATP-binding site is contributed by 261–263; that stretch reads RSE. Glu284 contacts L-serine. 348–351 provides a ligand contact to ATP; the sequence is EISS. Residue Ser384 participates in L-serine binding.

Belongs to the class-II aminoacyl-tRNA synthetase family. Type-1 seryl-tRNA synthetase subfamily. In terms of assembly, homodimer. The tRNA molecule binds across the dimer.

The protein localises to the cytoplasm. The enzyme catalyses tRNA(Ser) + L-serine + ATP = L-seryl-tRNA(Ser) + AMP + diphosphate + H(+). The catalysed reaction is tRNA(Sec) + L-serine + ATP = L-seryl-tRNA(Sec) + AMP + diphosphate + H(+). It functions in the pathway aminoacyl-tRNA biosynthesis; selenocysteinyl-tRNA(Sec) biosynthesis; L-seryl-tRNA(Sec) from L-serine and tRNA(Sec): step 1/1. Its function is as follows. Catalyzes the attachment of serine to tRNA(Ser). Is also able to aminoacylate tRNA(Sec) with serine, to form the misacylated tRNA L-seryl-tRNA(Sec), which will be further converted into selenocysteinyl-tRNA(Sec). This chain is Serine--tRNA ligase, found in Streptococcus pyogenes serotype M1.